Reading from the N-terminus, the 269-residue chain is Protein BASIC PENTACYSTEINE3 (269 aa).

The protein belongs to the BBR/BPC family. In terms of tissue distribution, expressed in seedlings, leaves and pistils. Detected in the base of flowers and tips of carpels, in petal vasculature, in anthers, in young rosette, in the lateral and primary roots, and in the gynobasal portion of the ovule.

It is found in the nucleus. In terms of biological role, transcriptional regulator that specifically binds to GA-rich elements (GAGA-repeats) present in regulatory sequences of genes involved in developmental processes. The chain is Protein BASIC PENTACYSTEINE3 (BPC3) from Arabidopsis thaliana (Mouse-ear cress).